The chain runs to 699 residues: Epithelial sodium channel subunit alpha (699 aa).

The disordered stretch occupies residues 1–71 (MLDHTRAPEL…EPRQPTEEEE (71 aa)). Topologically, residues 1-110 (MLDHTRAPEL…CSKHNRMKTA (110 aa)) are cytoplasmic. The helical transmembrane segment at 111-131 (FWAVLWLCTFGMMYWQFALLF) threads the bilayer. The Extracellular segment spans residues 132 to 589 (EEYFSYPVSL…SQWSLWFGSS (458 aa)). Cystine bridges form between C158–C332, C256–C263, C309–C316, C421–C506, C443–C483, C443–C502, C447–C498, C456–C483, C456–C506, and C458–C472. The interval 200–270 (RRRSTRDLRG…SDCFYQTYSS (71 aa)) is gating release of inhibition by proteolysis (GRIP); protease-sensitive region that is responsible for the proteolytic activation of the channel. A disordered region spans residues 211 to 244 (LPHPLQRLRTPPPPNPARSARSASSSVRDNNPQV). Positions 227–238 (ARSARSASSSVR) are enriched in low complexity. Residues 590-610 (VLSVVEMAELIFDLLVITLIM) traverse the membrane as a helical segment. Residues 611 to 699 (LLHRFRSRYW…SSACAPAMAL (89 aa)) lie on the Cytoplasmic side of the membrane. A disordered region spans residues 637-699 (ASSFPSRFCP…SSACAPAMAL (63 aa)). The segment covering 656–667 (PQQGTTPPLALT) has biased composition (low complexity). The PY motif; recruits WW domain-containing proteins and is thereby required for ubiquitination and inhibition of the channel by NEDD4 and NEDD4L signature appears at 669-673 (PPPAY).

The protein belongs to the amiloride-sensitive sodium channel (TC 1.A.6) family. SCNN1A subfamily. In terms of assembly, heterotrimer; containing an alpha/SCNN1A, a beta/SCNN1B and a gamma/SCNN1G subunit. Interacts with WWP1 (via WW domains). Interacts with WWP2 (via WW domains); inhibits the channel. Interacts with BPIFA1; the interaction is indirect via SCNN1B and inhibits the proteolytic processing of SCNN1A and SCNN1G and the activation of ENaC. Interacts with the full-length immature form of PCSK9 (pro-PCSK9). Ubiquitinated. Can be ubiquitinated at multiple sites and undergo monoubiquitination and polyubiquitination. Ubiquitination by NEDD4 or NEDD4L inhibits the ENaC channel through endocytosis, intracellular retention and degradation of its individual subunits. Post-translationally, ENaC is activated through the proteolytic maturation of its subunits. Furin cleaves the SCNN1A subunit, which results in a stepwise increase in the open probability of the channel due to the release of an inhibitory tract. BPIFA1, which is recruited by the SCNN1B subunit, prevents the proteolytic activation of ENaC. In terms of processing, N-glycosylated. As to expression, expressed in kidney (at protein level). Expressed in lung (at protein level). Expressed in the epididymis (at protein level). In the caput and corpus regions of the epididymis, expressed uniformly on the luminal and basal surfaces of the ducts and in the sperm in the duct lumen. Also expressed in distal colon and, at low levels, in liver.

It is found in the apical cell membrane. The protein resides in the cell projection. It localises to the cilium. Its subcellular location is the cytoplasmic granule. The protein localises to the cytoplasm. It is found in the cytoplasmic vesicle. The protein resides in the secretory vesicle. It localises to the acrosome. Its subcellular location is the flagellum. The enzyme catalyses Na(+)(in) = Na(+)(out). Its activity is regulated as follows. Originally identified and characterized by its inhibition by the diuretic drug amiloride. This is one of the three pore-forming subunits of the heterotrimeric epithelial sodium channel (ENaC), a critical regulator of sodium balance and fluid homeostasis. ENaC operates in epithelial tissues, where it mediates the electrodiffusion of sodium ions from extracellular fluid through the apical membrane of cells, with water following osmotically. It plays a key role in maintaining sodium homeostasis through electrogenic sodium reabsorption in the kidneys. Additionally, ENaC is essential for airway surface liquid homeostasis, which is crucial for proper mucus clearance. The protein is Epithelial sodium channel subunit alpha of Mus musculus (Mouse).